Here is a 958-residue protein sequence, read N- to C-terminus: MVDIVDKALRMGEGRQIKKLENVAKATNALEDEIAALDDEELKGQTAKFKQRIENGESLDKLMPEAFATVREASKRTLGLRHFDVQLMGGAALHWGNIAEMKTGEGKTLVATLPAYLNALDGQGVHVVTVNDYLASYQAELMGRVYRFLGMSTGCIITNQKPPERRKQYNADITYGTNNEFGFDYLRDNMAWEKSDLVQRGHHYAIVDEVDSILIDEARTPLIISGPAEGDVTRWYRQFARLVLKLNRDEDYEVDEKKKVVGILDPGITKVEDYLGIDNLYEPNNTALIGYLNNAIKAKELFLRDRDYVVTGGEVLIVDEHTGRILPGRRYNEGLHQAIEAKEGVEVKAENQTFATITLQNYFRMYDKLAGMTGTAETEAAEFMGTYKLGVLPIPTNKPMIREDKDDLIFRTKKEKLAAIVRDVAKRHKKGQPVLLGTASVESSEVVSSLLDVAKIPHQVLNAKQHDKEAAVVAVAGRKGAVTVATNMAGRGTDIMLGGNVEFLADAKLKSEGYSPDDTPDEYEKRWPGTLAEIKDQVKDEHEEVVKLGGLYVLGTERHESRRIDNQLRGRSGRQGDPGESRFYLSLEDDLMRLFNTQLVARVMAKGMPEGEPIEAKSVSKGVRTAQKAVESRNFEIRKNVLKYDDVMNKQRTVIYAERQAVLKGADIHEDILKFIDDTVLSYIKGANNGSDKPADWDWDGLFKAISSVYPIAVEQEGAKDAVDKLKGDKAVEALKELIVSDAKDQYSDFEDKLGSEGLRQLERRVVLAVLDRKWREHLYEMDYLKDGIGLRGMGQRDPLVEYQREGYQMYNSMIEAIKEETIQLLFHVDIERVAMTEDEETESDEDEAVNAAEAVMGLDGEAAATGESAPAEPETDDEAEKTTIDELADEQKNEKGIVGMQPISHAEGKVPANKRPKSEELHSPWADGRTFPGTGKNAQCPCGSGRKYKMCHGQNEQ.

Residues Q86, 104 to 108 (GEGKT), and D494 each bind ATP. Disordered regions lie at residues 863 to 883 (AAATGESAPAEPETDDEAEKT) and 902 to 937 (QPISHAEGKVPANKRPKSEELHSPWADGRTFPGTGK). Zn(2+)-binding residues include C941, C943, C952, and H953.

It belongs to the SecA family. Monomer and homodimer. Part of the essential Sec protein translocation apparatus which comprises SecA, SecYEG and auxiliary proteins SecDF. Other proteins may also be involved. The cofactor is Zn(2+).

The protein localises to the cell membrane. Its subcellular location is the cytoplasm. It carries out the reaction ATP + H2O + cellular proteinSide 1 = ADP + phosphate + cellular proteinSide 2.. Its function is as follows. Part of the Sec protein translocase complex. Interacts with the SecYEG preprotein conducting channel. Has a central role in coupling the hydrolysis of ATP to the transfer of proteins into and across the cell membrane, serving as an ATP-driven molecular motor driving the stepwise translocation of polypeptide chains across the membrane. The polypeptide is Protein translocase subunit SecA (Bifidobacterium adolescentis (strain ATCC 15703 / DSM 20083 / NCTC 11814 / E194a)).